The following is a 235-amino-acid chain: Myb family transcription factor PHL12 (235 aa).

The segment covering 1 to 12 (MMQSREEIRDDS) has biased composition (basic and acidic residues). Residues 1 to 20 (MMQSREEIRDDSSSGLVLTT) are disordered. The region spanning 20 to 80 (TDPKPRLRWT…HLQKFRLGKQ (61 aa)) is the HTH myb-type domain. The segment at residues 51–76 (PKTIMRVMGVKGLTLYHLKSHLQKFR) is a DNA-binding region (H-T-H motif). Positions 119 to 139 (RNMNEMQMEVQRRIEEEVVIE) are coiled coil.

It belongs to the MYB-CC family. Expressed in phloem and/or cambium.

The protein localises to the nucleus. The protein is Myb family transcription factor PHL12 of Arabidopsis thaliana (Mouse-ear cress).